The chain runs to 663 residues: DNA ligase (663 aa).

NAD(+)-binding positions include 33-37 (DYSYD), 82-83 (SI), and Glu-112. The active-site N6-AMP-lysine intermediate is Lys-114. NAD(+) contacts are provided by Arg-135, Glu-171, Lys-285, and Lys-309. Zn(2+) contacts are provided by Cys-403, Cys-406, Cys-419, and Cys-424. The 83-residue stretch at 581 to 663 (DKEAPLQGKV…LRILDAKSVS (83 aa)) folds into the BRCT domain.

It belongs to the NAD-dependent DNA ligase family. LigA subfamily. Mg(2+) is required as a cofactor. The cofactor is Mn(2+).

The catalysed reaction is NAD(+) + (deoxyribonucleotide)n-3'-hydroxyl + 5'-phospho-(deoxyribonucleotide)m = (deoxyribonucleotide)n+m + AMP + beta-nicotinamide D-nucleotide.. DNA ligase that catalyzes the formation of phosphodiester linkages between 5'-phosphoryl and 3'-hydroxyl groups in double-stranded DNA using NAD as a coenzyme and as the energy source for the reaction. It is essential for DNA replication and repair of damaged DNA. The sequence is that of DNA ligase from Chlamydia trachomatis serovar D (strain ATCC VR-885 / DSM 19411 / UW-3/Cx).